Consider the following 720-residue polypeptide: Phosphoribosylformylglycinamidine synthase subunit PurL (720 aa).

His-47 is an active-site residue. The ATP site is built by Tyr-50 and Lys-89. A Mg(2+)-binding site is contributed by Glu-91. Residues 92–95 and Arg-114 each bind substrate; that span reads SHNH. The active-site Proton acceptor is His-93. Asp-115 provides a ligand contact to Mg(2+). Gln-238 lines the substrate pocket. A Mg(2+)-binding site is contributed by Asp-266. Position 310-312 (310-312) interacts with substrate; the sequence is ESQ. Residues Asp-488 and Gly-525 each contribute to the ATP site. Asn-526 contributes to the Mg(2+) binding site. Ser-528 contributes to the substrate binding site.

This sequence belongs to the FGAMS family. In terms of assembly, monomer. Part of the FGAM synthase complex composed of 1 PurL, 1 PurQ and 2 PurS subunits.

It is found in the cytoplasm. The catalysed reaction is N(2)-formyl-N(1)-(5-phospho-beta-D-ribosyl)glycinamide + L-glutamine + ATP + H2O = 2-formamido-N(1)-(5-O-phospho-beta-D-ribosyl)acetamidine + L-glutamate + ADP + phosphate + H(+). It functions in the pathway purine metabolism; IMP biosynthesis via de novo pathway; 5-amino-1-(5-phospho-D-ribosyl)imidazole from N(2)-formyl-N(1)-(5-phospho-D-ribosyl)glycinamide: step 1/2. In terms of biological role, part of the phosphoribosylformylglycinamidine synthase complex involved in the purines biosynthetic pathway. Catalyzes the ATP-dependent conversion of formylglycinamide ribonucleotide (FGAR) and glutamine to yield formylglycinamidine ribonucleotide (FGAM) and glutamate. The FGAM synthase complex is composed of three subunits. PurQ produces an ammonia molecule by converting glutamine to glutamate. PurL transfers the ammonia molecule to FGAR to form FGAM in an ATP-dependent manner. PurS interacts with PurQ and PurL and is thought to assist in the transfer of the ammonia molecule from PurQ to PurL. This is Phosphoribosylformylglycinamidine synthase subunit PurL from Cereibacter sphaeroides (strain KD131 / KCTC 12085) (Rhodobacter sphaeroides).